A 255-amino-acid chain; its full sequence is uncharacterized protein (255 aa).

A divalent metal cation contacts are provided by H6, H8, E92, H128, H153, and D203.

The protein belongs to the metallo-dependent hydrolases superfamily. TatD-type hydrolase family. The cofactor is a divalent metal cation.

This is an uncharacterized protein from Bacillus subtilis (strain 168).